Reading from the N-terminus, the 340-residue chain is UDP-glucose 4-epimerase (340 aa).

NAD(+)-binding positions include 12-13, 32-37, 59-60, 81-85, N100, S125, Y150, K154, and F179; these read FI, DNYGNS, DV, and FAGLK. 2 residues coordinate substrate: S125 and Y150. Y150 serves as the catalytic Proton acceptor. Substrate is bound by residues N180, 200 to 201, 217 to 219, R232, and 292 to 295; these read NL, QVY, and RPGD.

It belongs to the NAD(P)-dependent epimerase/dehydratase family. In terms of assembly, homodimer. The cofactor is NAD(+).

It carries out the reaction UDP-alpha-D-glucose = UDP-alpha-D-galactose. It participates in carbohydrate metabolism; galactose metabolism. Involved in the metabolism of galactose. Catalyzes the conversion of UDP-galactose (UDP-Gal) to UDP-glucose (UDP-Glc) through a mechanism involving the transient reduction of NAD. Can also epimerize UDP-GalNAc to UDP-GlcNAc. Involved in the lacto-N-biose I/galacto-N-biose (LNB/GNB) degradation pathway, which is important for host intestinal colonization by bifidobacteria. In Bifidobacterium longum subsp. longum (strain ATCC 15707 / DSM 20219 / JCM 1217 / NCTC 11818 / E194b), this protein is UDP-glucose 4-epimerase (lnpD).